The sequence spans 149 residues: Putative inactive group IIC secretory phospholipase A2 (149 aa).

The first 18 residues, 1 to 18 (MKVIAILTLLLFCSPTHS), serve as a signal peptide directing secretion. 4 cysteine pairs are disulfide-bonded: Cys-44-Cys-142, Cys-77-Cys-107, Cys-95-Cys-112, and Cys-97-Cys-105. Positions 45, 47, and 49 each coordinate Ca(2+).

It belongs to the phospholipase A2 family. The cofactor is Ca(2+).

It is found in the secreted. Inactive phospholipase. The sequence is that of Putative inactive group IIC secretory phospholipase A2 (PLA2G2C) from Homo sapiens (Human).